A 387-amino-acid polypeptide reads, in one-letter code: Flap endonuclease 1 (387 aa).

The tract at residues 1 to 104 (MGILGLSKLI…GELAKRAERR (104 aa)) is N-domain. Aspartate 34 is a binding site for Mg(2+). Residues arginine 47 and arginine 70 each contribute to the DNA site. Positions 86, 158, 160, 179, and 181 each coordinate Mg(2+). The I-domain stretch occupies residues 122 to 253 (GIEKFNRRLV…KRAIELINNY (132 aa)). Glutamate 158 contacts DNA. DNA-binding residues include glycine 231 and aspartate 233. Position 233 (aspartate 233) interacts with Mg(2+). The tract at residues 336–344 (TQVRLDSFF) is interaction with PCNA. Residues 346 to 387 (TLPSTPNATNAAKRKAEEAKKSANNKKAKTSGGVGGRGRRPK) are disordered.

Belongs to the XPG/RAD2 endonuclease family. FEN1 subfamily. In terms of assembly, interacts with PCNA. Three molecules of FEN1 bind to one PCNA trimer with each molecule binding to one PCNA monomer. PCNA stimulates the nuclease activity without altering cleavage specificity. The cofactor is Mg(2+). In terms of processing, phosphorylated. Phosphorylation upon DNA damage induces relocalization to the nuclear plasma.

It localises to the nucleus. It is found in the nucleolus. Its subcellular location is the nucleoplasm. The protein localises to the mitochondrion. Functionally, structure-specific nuclease with 5'-flap endonuclease and 5'-3' exonuclease activities involved in DNA replication and repair. During DNA replication, cleaves the 5'-overhanging flap structure that is generated by displacement synthesis when DNA polymerase encounters the 5'-end of a downstream Okazaki fragment. It enters the flap from the 5'-end and then tracks to cleave the flap base, leaving a nick for ligation. Also involved in the long patch base excision repair (LP-BER) pathway, by cleaving within the apurinic/apyrimidinic (AP) site-terminated flap. Acts as a genome stabilization factor that prevents flaps from equilibrating into structures that lead to duplications and deletions. Also possesses 5'-3' exonuclease activity on nicked or gapped double-stranded DNA, and exhibits RNase H activity. Also involved in replication and repair of rDNA and in repairing mitochondrial DNA. In Drosophila erecta (Fruit fly), this protein is Flap endonuclease 1.